A 210-amino-acid chain; its full sequence is Large ribosomal subunit protein uL22 (210 aa).

The tract at residues 123–210 is disordered; sequence NEMTSKETVK…TKSTKKEGSK (88 aa). A compositionally biased stretch (basic and acidic residues) spans 126 to 157; that stretch reads TSKETVKEPAKKPSAKVEKPAEAKAPKQETST. The span at 158–185 shows a compositional bias: low complexity; it reads KKPTTTTESKPKTSKAPAQKQAAKVAKP.

It belongs to the universal ribosomal protein uL22 family. Part of the 50S ribosomal subunit.

In terms of biological role, this protein binds specifically to 23S rRNA; its binding is stimulated by other ribosomal proteins, e.g. L4, L17, and L20. It is important during the early stages of 50S assembly. It makes multiple contacts with different domains of the 23S rRNA in the assembled 50S subunit and ribosome. Its function is as follows. The globular domain of the protein is located near the polypeptide exit tunnel on the outside of the subunit, while an extended beta-hairpin is found that lines the wall of the exit tunnel in the center of the 70S ribosome. This is Large ribosomal subunit protein uL22 from Metamycoplasma arthritidis (strain 158L3-1) (Mycoplasma arthritidis).